A 578-amino-acid chain; its full sequence is Phosphoenolpyruvate-protein phosphotransferase (578 aa).

Catalysis depends on H195, which acts as the Tele-phosphohistidine intermediate. The phosphoenolpyruvate site is built by R302 and R338. Residues E437 and D461 each coordinate Mg(2+). Phosphoenolpyruvate-binding positions include 460–461 (ND) and R471. Residue C508 is the Proton donor of the active site.

It belongs to the PEP-utilizing enzyme family. Homodimer. It depends on Mg(2+) as a cofactor.

It localises to the cytoplasm. The catalysed reaction is L-histidyl-[protein] + phosphoenolpyruvate = N(pros)-phospho-L-histidyl-[protein] + pyruvate. Its function is as follows. General (non sugar-specific) component of the phosphoenolpyruvate-dependent sugar phosphotransferase system (sugar PTS). This major carbohydrate active-transport system catalyzes the phosphorylation of incoming sugar substrates concomitantly with their translocation across the cell membrane. Enzyme I transfers the phosphoryl group from phosphoenolpyruvate (PEP) to the phosphoryl carrier protein (HPr). This is Phosphoenolpyruvate-protein phosphotransferase (ptsI) from Bacillus sp. (strain S).